A 102-amino-acid polypeptide reads, in one-letter code: Putative ubiquitin-like protein FUBI-like protein ENSP00000310146 (102 aa).

The 77-residue stretch at 23-99 (LCPQVAYVRA…LEVVGRRLGV (77 aa)) folds into the Ubiquitin-like domain.

The protein is Putative ubiquitin-like protein FUBI-like protein ENSP00000310146 of Homo sapiens (Human).